Consider the following 187-residue polypeptide: UPF0301 protein YqgE (187 aa).

The protein belongs to the UPF0301 (AlgH) family.

This chain is UPF0301 protein YqgE, found in Escherichia coli O139:H28 (strain E24377A / ETEC).